A 156-amino-acid chain; its full sequence is Small ribosomal subunit protein uS7 (156 aa).

Belongs to the universal ribosomal protein uS7 family. In terms of assembly, part of the 30S ribosomal subunit. Contacts proteins S9 and S11.

One of the primary rRNA binding proteins, it binds directly to 16S rRNA where it nucleates assembly of the head domain of the 30S subunit. Is located at the subunit interface close to the decoding center, probably blocks exit of the E-site tRNA. This chain is Small ribosomal subunit protein uS7, found in Carboxydothermus hydrogenoformans (strain ATCC BAA-161 / DSM 6008 / Z-2901).